An 85-amino-acid polypeptide reads, in one-letter code: U4-theraphotoxin-Hhn1z (85 aa).

The first 22 residues, 1–22 (MKMTLIAILTCAAVLVLHTTAA), serve as a signal peptide directing secretion. Residues 23-48 (EELEAESQLMEVGMPDTELEAVDEER) constitute a propeptide that is removed on maturation. 3 disulfides stabilise this stretch: Cys52–Cys66, Cys56–Cys77, and Cys71–Cys82.

The protein belongs to the neurotoxin 12 (Hwtx-2) family. 02 (Hwtx-2) subfamily. In terms of tissue distribution, expressed by the venom gland.

The protein resides in the secreted. Functionally, postsynaptic neurotoxin. The chain is U4-theraphotoxin-Hhn1z from Cyriopagopus hainanus (Chinese bird spider).